Consider the following 122-residue polypeptide: Basic phospholipase A2 homolog Gln49-PLA2 (122 aa).

7 disulfide bridges follow: Cys-26–Cys-115, Cys-28–Cys-44, Cys-43–Cys-95, Cys-49–Cys-122, Cys-50–Cys-88, Cys-57–Cys-81, and Cys-75–Cys-86.

The protein belongs to the phospholipase A2 family. Group II subfamily. Q49 sub-subfamily. As to quaternary structure, monomer. As to expression, expressed by the venom gland.

It localises to the secreted. Snake venom phospholipase A2 (PLA2) homolog that shows local myotoxicity, apparent anticoagulant activity, and neurotoxicity. Shows analgesic effect on mice due to a decrease of action potentials and nerve conduction velocity. These effects are caused by inhibition of voltage-gated ion channels (potassium (Kv) and sodium (Nav)). In addition, analgesic effects are antagonized by naloxone, implying the mechanism of action is correlated with opioid receptors (probably indirectly). Does not show detectable PLA2 activity on egg yolk phospholipids. This is Basic phospholipase A2 homolog Gln49-PLA2 from Gloydius ussuriensis (Ussuri mamushi).